The sequence spans 546 residues: Chaperonin GroEL 1 (546 aa).

Residues 30–33 (TLGP), lysine 51, 87–91 (DGTTT), glycine 415, 479–481 (NAA), and aspartate 495 contribute to the ATP site.

It belongs to the chaperonin (HSP60) family. As to quaternary structure, forms a cylinder of 14 subunits composed of two heptameric rings stacked back-to-back. Interacts with the co-chaperonin GroES.

The protein localises to the cytoplasm. It catalyses the reaction ATP + H2O + a folded polypeptide = ADP + phosphate + an unfolded polypeptide.. Functionally, together with its co-chaperonin GroES, plays an essential role in assisting protein folding. The GroEL-GroES system forms a nano-cage that allows encapsulation of the non-native substrate proteins and provides a physical environment optimized to promote and accelerate protein folding. This chain is Chaperonin GroEL 1, found in Paraburkholderia xenovorans (strain LB400).